The chain runs to 421 residues: NADH-quinone oxidoreductase subunit F (421 aa).

54–63 (GRGGAGFSTG) is a binding site for NAD(+). 166 to 213 (GAGAYICGEETALLESLEGKKGMPRLKPPFPAGFGLYGCPTTINNVES) contacts FMN. [4Fe-4S] cluster contacts are provided by Cys-344, Cys-347, Cys-350, and Cys-390.

This sequence belongs to the complex I 51 kDa subunit family. The cofactor is FMN. It depends on [4Fe-4S] cluster as a cofactor.

It carries out the reaction a quinone + NADH + 5 H(+)(in) = a quinol + NAD(+) + 4 H(+)(out). Its function is as follows. NDH-1 shuttles electrons from NADH, via FMN and iron-sulfur (Fe-S) centers, to quinones in the respiratory chain. Couples the redox reaction to proton translocation (for every two electrons transferred, four hydrogen ions are translocated across the cytoplasmic membrane), and thus conserves the redox energy in a proton gradient. In Rickettsia typhi (strain ATCC VR-144 / Wilmington), this protein is NADH-quinone oxidoreductase subunit F (nuoF).